Here is a 381-residue protein sequence, read N- to C-terminus: Chaperone protein DnaJ (381 aa).

Positions 4-69 (DYYEILGVTR…QKRAAYDRFG (66 aa)) constitute a J domain. The CR-type zinc finger occupies 135 to 213 (GKTAQINIPS…CQGTRRVEKN (79 aa)). Zn(2+) is bound by residues cysteine 148, cysteine 151, cysteine 165, cysteine 168, cysteine 187, cysteine 190, cysteine 201, and cysteine 204. 4 CXXCXGXG motif repeats span residues 148-155 (CDACEGSG), 165-172 (CGTCHGAG), 187-194 (CPVCHGRG), and 201-208 (CPKCQGTR).

Belongs to the DnaJ family. Homodimer. Zn(2+) serves as cofactor.

It localises to the cytoplasm. Participates actively in the response to hyperosmotic and heat shock by preventing the aggregation of stress-denatured proteins and by disaggregating proteins, also in an autonomous, DnaK-independent fashion. Unfolded proteins bind initially to DnaJ; upon interaction with the DnaJ-bound protein, DnaK hydrolyzes its bound ATP, resulting in the formation of a stable complex. GrpE releases ADP from DnaK; ATP binding to DnaK triggers the release of the substrate protein, thus completing the reaction cycle. Several rounds of ATP-dependent interactions between DnaJ, DnaK and GrpE are required for fully efficient folding. Also involved, together with DnaK and GrpE, in the DNA replication of plasmids through activation of initiation proteins. The chain is Chaperone protein DnaJ from Bartonella henselae (strain ATCC 49882 / DSM 28221 / CCUG 30454 / Houston 1) (Rochalimaea henselae).